The following is a 456-amino-acid chain: RuvB-like helicase 1 (456 aa).

70-77 contacts ATP; the sequence is GPPGTGKT.

It belongs to the RuvB family. Forms homohexameric rings. May form a dodecamer with rept made of two stacked hexameric rings. Component of the chromatin remodeling Ino80 complex.

It is found in the nucleus. It catalyses the reaction ATP + H2O = ADP + phosphate + H(+). Acts as a transcriptional coactivator in Wg signaling caused by altered arm signaling. Pont and rept interfere antagonistically with nuclear arm signaling function, and are required to enhance or reduce arm activity, respectively. Also an essential cofactor for the normal function of Myc; required for cellular proliferation and growth. Its function is as follows. Proposed core component of the chromatin remodeling Ino80 complex which is involved in transcriptional regulation, DNA replication and probably DNA repair. This is RuvB-like helicase 1 from Drosophila pseudoobscura pseudoobscura (Fruit fly).